The following is a 513-amino-acid chain: MSSDPGYQAPVVTVSSSIPRRGVGDSVLIVPVVTRDDAAAVLAAAPFLDKDAVREIEAALKSLGATGGEGQTHRLVVSALPVASVLTIGLGKERDEWPADTVRRVAGNAARSLDKVAAVLTTLSALDLEAAIEGLILGSYRFTEFRSAKTAPKDGGLRAITALSQESKSRARDAAQRATDIATAVATARDFVNTPPSHLHPDEFAKRAKALGEAAGLEVEILDDKALVKAGYGGIVGVGKGSSRPPRLVRLSHKGAVRTRTRGARTGGSKRVALVGKGITFDTGGISIKPAANMHHMTSDMGGAAAVIATVVLAAKQKLPIDVIATVPMAENMPSATAQRPGDVLTQYGGTTVEVLNTDAEGRLILADAIVRACEDNPDYLIETSTLTGAQTVALGSRTPGVMGSDAFRDRVATLSQQVGENAWAMPLPEELKDDLKSTVADLANVSGSRFAGMLVAGTYLREFVADGVEWAHIDVAAPAYNSGGPWGYTPKGGTGVPTRTMFAVLEEIAREG.

Positions 277 and 282 each coordinate Mn(2+). K289 is a catalytic residue. Mn(2+) contacts are provided by D300, D359, and E361. The active site involves R363.

Belongs to the peptidase M17 family. Mn(2+) is required as a cofactor.

It localises to the cytoplasm. The catalysed reaction is Release of an N-terminal amino acid, Xaa-|-Yaa-, in which Xaa is preferably Leu, but may be other amino acids including Pro although not Arg or Lys, and Yaa may be Pro. Amino acid amides and methyl esters are also readily hydrolyzed, but rates on arylamides are exceedingly low.. It catalyses the reaction Release of an N-terminal amino acid, preferentially leucine, but not glutamic or aspartic acids.. Functionally, presumably involved in the processing and regular turnover of intracellular proteins. Catalyzes the removal of unsubstituted N-terminal amino acids from various peptides. This chain is Probable cytosol aminopeptidase, found in Mycobacterium sp. (strain JLS).